A 571-amino-acid polypeptide reads, in one-letter code: Urease subunit alpha (571 aa).

One can recognise a Urease domain in the interval 133–571 (GGIDTHVHFV…LPLTQRYFLF (439 aa)). The Ni(2+) site is built by His138, His140, and Lys221. Lys221 carries the post-translational modification N6-carboxylysine. His223 lines the substrate pocket. Ni(2+)-binding residues include His250 and His276. His324 functions as the Proton donor in the catalytic mechanism. A Ni(2+)-binding site is contributed by Asp364.

Belongs to the metallo-dependent hydrolases superfamily. Urease alpha subunit family. As to quaternary structure, heterotrimer of UreA (gamma), UreB (beta) and UreC (alpha) subunits. Three heterotrimers associate to form the active enzyme. Ni cation serves as cofactor. Post-translationally, carboxylation allows a single lysine to coordinate two nickel ions.

Its subcellular location is the cytoplasm. The catalysed reaction is urea + 2 H2O + H(+) = hydrogencarbonate + 2 NH4(+). The protein operates within nitrogen metabolism; urea degradation; CO(2) and NH(3) from urea (urease route): step 1/1. The chain is Urease subunit alpha from Staphylococcus xylosus.